A 363-amino-acid chain; its full sequence is uncharacterized protein (363 aa).

The S-adenosyl-L-methionine site is built by glutamine 198, tyrosine 225, glutamate 246, and aspartate 291. Cysteine 318 serves as the catalytic Nucleophile.

Belongs to the class I-like SAM-binding methyltransferase superfamily. RNA M5U methyltransferase family.

This is an uncharacterized protein from Mycoplasma mobile (strain ATCC 43663 / 163K / NCTC 11711) (Mesomycoplasma mobile).